The primary structure comprises 31 residues: Cytochrome b6-f complex subunit 6 (31 aa).

Residues 3-23 (IITSYFGFLLTALTIASALFI) form a helical membrane-spanning segment.

This sequence belongs to the PetL family. As to quaternary structure, the 4 large subunits of the cytochrome b6-f complex are cytochrome b6, subunit IV (17 kDa polypeptide, PetD), cytochrome f and the Rieske protein, while the 4 small subunits are PetG, PetL, PetM and PetN. The complex functions as a dimer.

The protein resides in the plastid. Its subcellular location is the chloroplast thylakoid membrane. In terms of biological role, component of the cytochrome b6-f complex, which mediates electron transfer between photosystem II (PSII) and photosystem I (PSI), cyclic electron flow around PSI, and state transitions. PetL is important for photoautotrophic growth as well as for electron transfer efficiency and stability of the cytochrome b6-f complex. This Helianthus annuus (Common sunflower) protein is Cytochrome b6-f complex subunit 6.